Here is a 353-residue protein sequence, read N- to C-terminus: UDP-N-acetylglucosamine--N-acetylmuramyl-(pentapeptide) pyrophosphoryl-undecaprenol N-acetylglucosamine transferase (353 aa).

UDP-N-acetyl-alpha-D-glucosamine contacts are provided by residues 14-16 (TGG), N126, R162, S190, I243, 262-267 (ALTVSE), and Q287.

Belongs to the glycosyltransferase 28 family. MurG subfamily.

The protein resides in the cell inner membrane. It catalyses the reaction di-trans,octa-cis-undecaprenyl diphospho-N-acetyl-alpha-D-muramoyl-L-alanyl-D-glutamyl-meso-2,6-diaminopimeloyl-D-alanyl-D-alanine + UDP-N-acetyl-alpha-D-glucosamine = di-trans,octa-cis-undecaprenyl diphospho-[N-acetyl-alpha-D-glucosaminyl-(1-&gt;4)]-N-acetyl-alpha-D-muramoyl-L-alanyl-D-glutamyl-meso-2,6-diaminopimeloyl-D-alanyl-D-alanine + UDP + H(+). It participates in cell wall biogenesis; peptidoglycan biosynthesis. In terms of biological role, cell wall formation. Catalyzes the transfer of a GlcNAc subunit on undecaprenyl-pyrophosphoryl-MurNAc-pentapeptide (lipid intermediate I) to form undecaprenyl-pyrophosphoryl-MurNAc-(pentapeptide)GlcNAc (lipid intermediate II). The protein is UDP-N-acetylglucosamine--N-acetylmuramyl-(pentapeptide) pyrophosphoryl-undecaprenol N-acetylglucosamine transferase of Vibrio atlanticus (strain LGP32) (Vibrio splendidus (strain Mel32)).